A 477-amino-acid chain; its full sequence is 3-isopropylmalate dehydratase large subunit (477 aa).

3 residues coordinate [4Fe-4S] cluster: Cys-352, Cys-413, and Cys-416.

It belongs to the aconitase/IPM isomerase family. LeuC type 1 subfamily. Heterodimer of LeuC and LeuD. [4Fe-4S] cluster is required as a cofactor.

It catalyses the reaction (2R,3S)-3-isopropylmalate = (2S)-2-isopropylmalate. It functions in the pathway amino-acid biosynthesis; L-leucine biosynthesis; L-leucine from 3-methyl-2-oxobutanoate: step 2/4. Its function is as follows. Catalyzes the isomerization between 2-isopropylmalate and 3-isopropylmalate, via the formation of 2-isopropylmaleate. This Pseudomonas putida (strain GB-1) protein is 3-isopropylmalate dehydratase large subunit.